A 164-amino-acid polypeptide reads, in one-letter code: Protein SprT (164 aa).

The region spanning 14–156 (QLAESFFKRP…LCRRCRQTLV (143 aa)) is the SprT-like domain. His69 lines the Zn(2+) pocket. Glu70 is a catalytic residue. Position 73 (His73) interacts with Zn(2+).

Belongs to the SprT family. Zn(2+) is required as a cofactor.

It is found in the cytoplasm. This chain is Protein SprT, found in Pseudomonas fluorescens (strain ATCC BAA-477 / NRRL B-23932 / Pf-5).